We begin with the raw amino-acid sequence, 94 residues long: Cell division topological specificity factor (94 aa).

It belongs to the MinE family.

Functionally, prevents the cell division inhibition by proteins MinC and MinD at internal division sites while permitting inhibition at polar sites. This ensures cell division at the proper site by restricting the formation of a division septum at the midpoint of the long axis of the cell. The protein is Cell division topological specificity factor of Hamiltonella defensa subsp. Acyrthosiphon pisum (strain 5AT).